The following is a 1571-amino-acid chain: Disco-interacting protein 2 homolog A (1571 aa).

Residues 9 to 127 (EAAPLPAEVR…KRRSVLVHSS (119 aa)) form the DMAP1-binding domain. A disordered region spans residues 60–203 (LQAENRIPGP…APSAAATPGA (144 aa)). Over residues 86–98 (ASRDERFRSDVHT) the composition is skewed to basic and acidic residues. Phosphoserine is present on S94. Composition is skewed to polar residues over residues 127 to 139 (SVET…TSSA) and 152 to 162 (LTSTPLQSHSS). A phosphothreonine mark is found at T132 and T155. Residues 174–203 (SSTSSSASSTSSHPGGRPTTAPSAAATPGA) show a composition bias toward low complexity. 2 short sequence motifs (PXXP motif; required for interaction with CTTN) span residues 283–286 (PKRP) and 307–310 (PNQP). The interval 302-327 (VQQPDPNQPKPEGSETSVLRGEPLTA) is disordered.

It belongs to the DIP2 family. Interacts with FSTL1; DIP2A may act as a cell surface receptor for FSTL1. Interacts (via N-terminus) with CTTN (via SH3 domain); the interaction promotes acetylation of CTTN and is required for proper synaptic transmission. Interacts with SHANK3. As to expression, low expression in all tissues tested.

It localises to the cell membrane. The protein localises to the mitochondrion. It is found in the cell projection. Its subcellular location is the dendritic spine. It carries out the reaction acetate + ATP + CoA = acetyl-CoA + AMP + diphosphate. Catalyzes the de novo synthesis of acetyl-CoA in vitro. Promotes acetylation of CTTN, possibly by providing the acetyl donor, ensuring correct dendritic spine morphology and synaptic transmission. Binds to follistatin-related protein FSTL1 and may act as a cell surface receptor for FSTL1, contributing to AKT activation and subsequent FSTL1-induced survival and function of endothelial cells and cardiac myocytes. In Homo sapiens (Human), this protein is Disco-interacting protein 2 homolog A (DIP2A).